We begin with the raw amino-acid sequence, 256 residues long: Triosephosphate isomerase (256 aa).

Substrate is bound at residue 12 to 14 (NWK). His99 serves as the catalytic Electrophile. The Proton acceptor role is filled by Glu171. Substrate is bound by residues Gly177, Ser217, and 238–239 (GG).

The protein belongs to the triosephosphate isomerase family. In terms of assembly, homodimer.

Its subcellular location is the cytoplasm. The catalysed reaction is D-glyceraldehyde 3-phosphate = dihydroxyacetone phosphate. Its pathway is carbohydrate biosynthesis; gluconeogenesis. The protein operates within carbohydrate degradation; glycolysis; D-glyceraldehyde 3-phosphate from glycerone phosphate: step 1/1. In terms of biological role, involved in the gluconeogenesis. Catalyzes stereospecifically the conversion of dihydroxyacetone phosphate (DHAP) to D-glyceraldehyde-3-phosphate (G3P). The protein is Triosephosphate isomerase of Rubrobacter xylanophilus (strain DSM 9941 / JCM 11954 / NBRC 16129 / PRD-1).